Consider the following 451-residue polypeptide: MILLVNLFVLLSVVCILLNLAGFILGCQGAQFVSSVPRCDLVDLGEGKICFCCEEFQPAKCTDKENALKLFPVQPCSAVHLLLKKVLFALCALNALTTTVCLVAAALRYLQIFASRRPCIDESQMSAEDVEEHGRIPDPDDFVPPVPPPSYFATFYSCTPRMNRRMVGSDVIPLPHIYGARIKGVEVFCPLDPPPPYEAVVSQTDQEQESSFQMPEGPETAASPAEPVCTQITQGGALTNTTGEENTSGSTPILTLVQPPRSRRALPLLRTRSKSDPVLHHSEERATPVLSCEAATQTERRLDLATVTLRRGARPRASRCRPRSLIDYRSYIDTKLLVARFLEQSSCSMTPDIHELVENIKSVLKSDEGHMEEAITSASFLEQIMAPSQPSTSQAQELSWRRQPGLLHLRSCGDLSTFSLTARPRAERRPQQRAEAERPHSLIGVIRETVL.

The N-terminal stretch at 1-29 is a signal peptide; sequence MILLVNLFVLLSVVCILLNLAGFILGCQG. Residues 30-85 are Lumenal-facing; sequence AQFVSSVPRCDLVDLGEGKICFCCEEFQPAKCTDKENALKLFPVQPCSAVHLLLKK. Residues 86 to 106 form a helical membrane-spanning segment; the sequence is VLFALCALNALTTTVCLVAAA. At 107–451 the chain is on the cytoplasmic side; it reads LRYLQIFASR…LIGVIRETVL (345 aa). A mediates interaction with EPN1 region spans residues 107 to 451; the sequence is LRYLQIFASR…LIGVIRETVL (345 aa). 2 short sequence motifs (PPxY; mediates interaction with ITCH) span residues 148–151 and 194–197; these read PPSY and PPPY. Over residues 204 to 213 the composition is skewed to polar residues; it reads TDQEQESSFQ. The tract at residues 204–224 is disordered; the sequence is TDQEQESSFQMPEGPETAASP. K274 participates in a covalent cross-link: Glycyl lysine isopeptide (Lys-Gly) (interchain with G-Cter in ubiquitin). Residue S275 is modified to Phosphoserine. K365 participates in a covalent cross-link: Glycyl lysine isopeptide (Lys-Gly) (interchain with G-Cter in ubiquitin).

This sequence belongs to the ENTREP family. Interacts with ITCH; enhances the ubiquitination of CXCR4 by ITCH and the subsequent endocytosis and desensitization of the receptor. Interacts with EPN1.

Its subcellular location is the early endosome membrane. The protein resides in the late endosome membrane. It is found in the recycling endosome membrane. The protein localises to the cell membrane. Functions as an activator of the E3 ubiquitin protein ligase ITCH in the ubiquitination of the CXCL12-activated CXCR4 receptor. Thereby, triggers CXCR4 endocytosis and desensitization, negatively regulating the CXCL12/CXCR4 signaling pathway. This Mus musculus (Mouse) protein is Endosomal transmembrane epsin interactor 1.